The primary structure comprises 350 residues: Nicotinate-nucleotide--dimethylbenzimidazole phosphoribosyltransferase (350 aa).

Glutamate 317 serves as the catalytic Proton acceptor.

The protein belongs to the CobT family.

The enzyme catalyses 5,6-dimethylbenzimidazole + nicotinate beta-D-ribonucleotide = alpha-ribazole 5'-phosphate + nicotinate + H(+). Its pathway is nucleoside biosynthesis; alpha-ribazole biosynthesis; alpha-ribazole from 5,6-dimethylbenzimidazole: step 1/2. Catalyzes the synthesis of alpha-ribazole-5'-phosphate from nicotinate mononucleotide (NAMN) and 5,6-dimethylbenzimidazole (DMB). This chain is Nicotinate-nucleotide--dimethylbenzimidazole phosphoribosyltransferase, found in Shewanella sp. (strain W3-18-1).